A 144-amino-acid polypeptide reads, in one-letter code: Large ribosomal subunit protein uL22 (144 aa).

Residues 1–38 form a disordered region; that stretch reads MAETQTTKKGAKRVRQPVPARRSKPNRPAKAAPGPHAS. Basic residues predominate over residues 9–27; sequence KGAKRVRQPVPARRSKPNR.

This sequence belongs to the universal ribosomal protein uL22 family. As to quaternary structure, part of the 50S ribosomal subunit.

This protein binds specifically to 23S rRNA; its binding is stimulated by other ribosomal proteins, e.g. L4, L17, and L20. It is important during the early stages of 50S assembly. It makes multiple contacts with different domains of the 23S rRNA in the assembled 50S subunit and ribosome. Functionally, the globular domain of the protein is located near the polypeptide exit tunnel on the outside of the subunit, while an extended beta-hairpin is found that lines the wall of the exit tunnel in the center of the 70S ribosome. This Anaeromyxobacter sp. (strain Fw109-5) protein is Large ribosomal subunit protein uL22.